The sequence spans 475 residues: Aspartyl/glutamyl-tRNA(Asn/Gln) amidotransferase subunit B (475 aa).

Belongs to the GatB/GatE family. GatB subfamily. Heterotrimer of A, B and C subunits.

It catalyses the reaction L-glutamyl-tRNA(Gln) + L-glutamine + ATP + H2O = L-glutaminyl-tRNA(Gln) + L-glutamate + ADP + phosphate + H(+). The enzyme catalyses L-aspartyl-tRNA(Asn) + L-glutamine + ATP + H2O = L-asparaginyl-tRNA(Asn) + L-glutamate + ADP + phosphate + 2 H(+). In terms of biological role, allows the formation of correctly charged Asn-tRNA(Asn) or Gln-tRNA(Gln) through the transamidation of misacylated Asp-tRNA(Asn) or Glu-tRNA(Gln) in organisms which lack either or both of asparaginyl-tRNA or glutaminyl-tRNA synthetases. The reaction takes place in the presence of glutamine and ATP through an activated phospho-Asp-tRNA(Asn) or phospho-Glu-tRNA(Gln). In Clostridium novyi (strain NT), this protein is Aspartyl/glutamyl-tRNA(Asn/Gln) amidotransferase subunit B.